A 308-amino-acid chain; its full sequence is Elongation factor Ts (308 aa).

The involved in Mg(2+) ion dislocation from EF-Tu stretch occupies residues 80 to 83 (TDFV).

The protein belongs to the EF-Ts family.

The protein resides in the cytoplasm. Functionally, associates with the EF-Tu.GDP complex and induces the exchange of GDP to GTP. It remains bound to the aminoacyl-tRNA.EF-Tu.GTP complex up to the GTP hydrolysis stage on the ribosome. In Rhodopseudomonas palustris (strain BisB18), this protein is Elongation factor Ts.